The following is a 267-amino-acid chain: RWD domain-containing protein 3 (267 aa).

Residues Glu-7–Ile-114 enclose the RWD domain. Interaction with UBE2I/UBC9 stretches follow at residues Ala-13–Ile-15 and Val-100–Glu-102.

As to quaternary structure, isoform 1 and isoform 2 interact with UBE2I/UBC9. Isoform 1 shows a greater interaction with NFKBIA and HIF1A as compared to isoform 2. Isoform 2 interacts with NCOA2 and NR3C1. In terms of tissue distribution, isoform 1 and isoform 2 are expressed in glioma tumors (at protein level). Expressed in a wide number of tissues with highest expression in cerebellum, pituitary, heart, kidney, liver, stomach, pancreas, prostate and spleen. Low levels in thalamus, spinal cord, esophagus, thymus, lung and peripheral blood leukocytes. A higher level expression seen in pituitary tumors as compared to the pituitary gland.

Its subcellular location is the nucleus. The protein localises to the cytoplasm. In terms of biological role, enhancer of SUMO conjugation. Via its interaction with UBE2I/UBC9, increases SUMO conjugation to proteins by promoting the binding of E1 and E2 enzymes, thioester linkage between SUMO and UBE2I/UBC9 and transfer of SUMO to specific target proteins which include HIF1A, PIAS, NFKBIA, NR3C1 and TOP1. Isoform 1 and isoform 2 positively regulate the NF-kappa-B signaling pathway by enhancing the sumoylation of NF-kappa-B inhibitor alpha (NFKBIA), promoting its stabilization which consequently leads to an increased inhibition of NF-kappa-B transcriptional activity. Isoform 1 and isoform 2 negatively regulate the hypoxia-inducible factor-1 alpha (HIF1A) signaling pathway by increasing the sumoylation of HIF1A, promoting its stabilization, transcriptional activity and the expression of its target gene VEGFA during hypoxia. Isoform 2 promotes the sumoylation and transcriptional activity of the glucocorticoid receptor NR3C1 and enhances the interaction of SUMO1 and NR3C1 with UBE2I/UBC9. Has no effect on ubiquitination. The polypeptide is RWD domain-containing protein 3 (RWDD3) (Homo sapiens (Human)).